A 426-amino-acid polypeptide reads, in one-letter code: Serine hydroxymethyltransferase (426 aa).

(6S)-5,6,7,8-tetrahydrofolate contacts are provided by residues Leu-113 and 117–119 (GHL). Lys-222 carries the N6-(pyridoxal phosphate)lysine modification. A (6S)-5,6,7,8-tetrahydrofolate-binding site is contributed by 363 to 365 (SAF).

It belongs to the SHMT family. As to quaternary structure, homodimer. Pyridoxal 5'-phosphate is required as a cofactor.

It localises to the cytoplasm. The enzyme catalyses (6R)-5,10-methylene-5,6,7,8-tetrahydrofolate + glycine + H2O = (6S)-5,6,7,8-tetrahydrofolate + L-serine. The protein operates within one-carbon metabolism; tetrahydrofolate interconversion. It functions in the pathway amino-acid biosynthesis; glycine biosynthesis; glycine from L-serine: step 1/1. In terms of biological role, catalyzes the reversible interconversion of serine and glycine with tetrahydrofolate (THF) serving as the one-carbon carrier. This reaction serves as the major source of one-carbon groups required for the biosynthesis of purines, thymidylate, methionine, and other important biomolecules. Also exhibits THF-independent aldolase activity toward beta-hydroxyamino acids, producing glycine and aldehydes, via a retro-aldol mechanism. This is Serine hydroxymethyltransferase from Phocaeicola vulgatus (strain ATCC 8482 / DSM 1447 / JCM 5826 / CCUG 4940 / NBRC 14291 / NCTC 11154) (Bacteroides vulgatus).